The sequence spans 452 residues: Ribosomal L1 domain-containing protein 1 (452 aa).

Met1 carries the N-acetylmethionine modification. Residues Lys119 and Lys253 each participate in a glycyl lysine isopeptide (Lys-Gly) (interchain with G-Cter in SUMO2) cross-link. The stretch at 277–350 (LRSLRKQELK…QKVTEECEEA (74 aa)) forms a coiled coil. The disordered stretch occupies residues 283–452 (QELKKRKREN…DKKTKAAHSN (170 aa)). Basic and acidic residues predominate over residues 292–301 (NAKLKKESKM). The span at 309-319 (ATSLLTQSGLA) shows a compositional bias: polar residues. Residues 330 to 341 (QKKKTNKAHKKQ) are compositionally biased toward basic residues. A phosphothreonine mark is found at Thr334, Thr344, Thr360, Thr399, and Thr407. Residues 414–423 (KDVQEFRKPE) are compositionally biased toward basic and acidic residues. Polar residues predominate over residues 425 to 440 (SSFSTPRKSGKKASNT). Position 429 is a phosphothreonine (Thr429). An N6-acetyllysine modification is found at Lys432. The residue at position 433 (Ser433) is a Phosphoserine.

This sequence belongs to the universal ribosomal protein uL1 family. Highly divergent. As to quaternary structure, interacts with ING1. Interacts with KPNA7 and KPNA2.

It is found in the nucleus. It localises to the nucleolus. Its function is as follows. Regulates cellular senescence through inhibition of PTEN translation. Acts as a pro-apoptotic regulator in response to DNA damage. The chain is Ribosomal L1 domain-containing protein 1 from Mus musculus (Mouse).